The chain runs to 127 residues: Large ribosomal subunit protein bL21 (127 aa).

Belongs to the bacterial ribosomal protein bL21 family. In terms of assembly, part of the 50S ribosomal subunit. Contacts protein L20.

In terms of biological role, this protein binds to 23S rRNA in the presence of protein L20. The sequence is that of Large ribosomal subunit protein bL21 from Blochmanniella floridana.